Here is an 81-residue protein sequence, read N- to C-terminus: Photosystem I iron-sulfur center (81 aa).

2 4Fe-4S ferredoxin-type domains span residues 2-31 (SHSV…MIPW) and 39-68 (IAPA…VRVY). Residues C11, C14, C17, C21, C48, C51, C54, and C58 each contribute to the [4Fe-4S] cluster site.

As to quaternary structure, the eukaryotic PSI reaction center is composed of at least 11 subunits. It depends on [4Fe-4S] cluster as a cofactor.

The protein resides in the plastid. It localises to the chloroplast thylakoid membrane. The enzyme catalyses reduced [plastocyanin] + hnu + oxidized [2Fe-2S]-[ferredoxin] = oxidized [plastocyanin] + reduced [2Fe-2S]-[ferredoxin]. Its function is as follows. Apoprotein for the two 4Fe-4S centers FA and FB of photosystem I (PSI); essential for photochemical activity. FB is the terminal electron acceptor of PSI, donating electrons to ferredoxin. The C-terminus interacts with PsaA/B/D and helps assemble the protein into the PSI complex. Required for binding of PsaD and PsaE to PSI. PSI is a plastocyanin-ferredoxin oxidoreductase, converting photonic excitation into a charge separation, which transfers an electron from the donor P700 chlorophyll pair to the spectroscopically characterized acceptors A0, A1, FX, FA and FB in turn. The protein is Photosystem I iron-sulfur center of Drimys granadensis.